Here is a 271-residue protein sequence, read N- to C-terminus: ATP synthase subunit delta (271 aa).

The protein belongs to the ATPase delta chain family. As to quaternary structure, F-type ATPases have 2 components, F(1) - the catalytic core - and F(0) - the membrane proton channel. F(1) has five subunits: alpha(3), beta(3), gamma(1), delta(1), epsilon(1). F(0) has three main subunits: a(1), b(2) and c(10-14). The alpha and beta chains form an alternating ring which encloses part of the gamma chain. F(1) is attached to F(0) by a central stalk formed by the gamma and epsilon chains, while a peripheral stalk is formed by the delta and b chains.

It localises to the cell membrane. Its function is as follows. F(1)F(0) ATP synthase produces ATP from ADP in the presence of a proton or sodium gradient. F-type ATPases consist of two structural domains, F(1) containing the extramembraneous catalytic core and F(0) containing the membrane proton channel, linked together by a central stalk and a peripheral stalk. During catalysis, ATP synthesis in the catalytic domain of F(1) is coupled via a rotary mechanism of the central stalk subunits to proton translocation. This protein is part of the stalk that links CF(0) to CF(1). It either transmits conformational changes from CF(0) to CF(1) or is implicated in proton conduction. The polypeptide is ATP synthase subunit delta (Corynebacterium glutamicum (strain R)).